Reading from the N-terminus, the 584-residue chain is Arginine--tRNA ligase (584 aa).

Positions 129–139 match the 'HIGH' region motif; that stretch reads ANPTGPLHVGH.

This sequence belongs to the class-I aminoacyl-tRNA synthetase family. In terms of assembly, monomer.

It localises to the cytoplasm. The catalysed reaction is tRNA(Arg) + L-arginine + ATP = L-arginyl-tRNA(Arg) + AMP + diphosphate. This chain is Arginine--tRNA ligase, found in Halorhodospira halophila (strain DSM 244 / SL1) (Ectothiorhodospira halophila (strain DSM 244 / SL1)).